We begin with the raw amino-acid sequence, 695 residues long: UvrABC system protein C (695 aa).

Residues 1–10 (MNQDPAETRD) are compositionally biased toward basic and acidic residues. A disordered region spans residues 1 to 53 (MNQDPAETRDTAAPPPADTTSPSPVSPELEPRSAPGAQDIDAASASLTVDEDD). Residues 18–27 (DTTSPSPVSP) show a composition bias toward low complexity. Residues 88 to 166 (TSPGVYRMLN…IKQLRPRFNV (79 aa)) form the GIY-YIG domain. Residues 276–311 (RAVKQELAVEMEKASNELEFETAALYRDRLAALSAI) form the UVR domain.

This sequence belongs to the UvrC family. Interacts with UvrB in an incision complex.

Its subcellular location is the cytoplasm. Functionally, the UvrABC repair system catalyzes the recognition and processing of DNA lesions. UvrC both incises the 5' and 3' sides of the lesion. The N-terminal half is responsible for the 3' incision and the C-terminal half is responsible for the 5' incision. The protein is UvrABC system protein C of Rhodopseudomonas palustris (strain BisB5).